Reading from the N-terminus, the 567-residue chain is Malate synthase, glyoxysomal (567 aa).

The active-site Proton acceptor is Arg-182. Residue Asp-468 is the Proton donor of the active site. A Microbody targeting signal motif is present at residues 565-567; that stretch reads SKL.

The protein belongs to the malate synthase family.

The protein resides in the glyoxysome. It catalyses the reaction glyoxylate + acetyl-CoA + H2O = (S)-malate + CoA + H(+). Its pathway is carbohydrate metabolism; glyoxylate cycle; (S)-malate from isocitrate: step 2/2. This Gossypium hirsutum (Upland cotton) protein is Malate synthase, glyoxysomal.